Consider the following 328-residue polypeptide: GTPase Obg (328 aa).

In terms of domain architecture, Obg spans methionine 1 to leucine 159. The OBG-type G domain maps to serine 160 to lysine 327. Residues glycine 166–serine 173, phenylalanine 191–valine 195, aspartate 212–glycine 215, asparagine 279–aspartate 282, and serine 308–tyrosine 310 each bind GTP. Mg(2+) is bound by residues serine 173 and threonine 193.

This sequence belongs to the TRAFAC class OBG-HflX-like GTPase superfamily. OBG GTPase family. Monomer. The cofactor is Mg(2+).

The protein localises to the cytoplasm. In terms of biological role, an essential GTPase which binds GTP, GDP and possibly (p)ppGpp with moderate affinity, with high nucleotide exchange rates and a fairly low GTP hydrolysis rate. Plays a role in control of the cell cycle, stress response, ribosome biogenesis and in those bacteria that undergo differentiation, in morphogenesis control. The protein is GTPase Obg of Rickettsia bellii (strain RML369-C).